We begin with the raw amino-acid sequence, 565 residues long: E3 ubiquitin-protein ligase RNF168 (565 aa).

Residues C16–R55 form an RING-type zinc finger. S70 carries the phosphoserine modification. The short motif at L110–E128 is the LR motif 1 element. Position 134 is a phosphoserine (S134). The short motif at E143–A151 is the UMI motif element. Disordered regions lie at residues L150–G223 and S252–C302. Basic and acidic residues predominate over residues E157–A179. The short motif at M168–E191 is the MIU motif 1 element. Polar residues predominate over residues S181–S201. S197 carries the phosphoserine modification. A Glycyl lysine isopeptide (Lys-Gly) (interchain with G-Cter in SUMO2) cross-link involves residue K210. Polar residues predominate over residues P275–S293. S413 and S414 each carry phosphoserine. Residues R438–M461 carry the MIU motif 2 motif. The interval K458–K521 is disordered. The LR motif 2 motif lies at R465 to R476. Residues Q466–T477 show a composition bias toward polar residues. The residue at position 469 (S469) is a Phosphoserine. Residues D504 to E518 show a composition bias toward basic and acidic residues. Residue K525 forms a Glycyl lysine isopeptide (Lys-Gly) (interchain with G-Cter in SUMO2) linkage.

The protein belongs to the RNF168 family. As to quaternary structure, monomer. Interacts with UBE2N/UBC13. In terms of processing, sumoylated with SUMO1 by PIAS4 in response to double-strand breaks (DSBs). Post-translationally, ubiquitinated.

The protein resides in the nucleus. The catalysed reaction is S-ubiquitinyl-[E2 ubiquitin-conjugating enzyme]-L-cysteine + [acceptor protein]-L-lysine = [E2 ubiquitin-conjugating enzyme]-L-cysteine + N(6)-ubiquitinyl-[acceptor protein]-L-lysine.. Its pathway is protein modification; protein ubiquitination. Functionally, E3 ubiquitin-protein ligase required for accumulation of repair proteins to sites of DNA damage. Acts with UBE2N/UBC13 to amplify the RNF8-dependent histone ubiquitination. Recruited to sites of DNA damage at double-strand breaks (DSBs) by binding to ubiquitinated histone H2A and H2AX and amplifies the RNF8-dependent H2A ubiquitination, promoting the formation of 'Lys-63'-linked ubiquitin conjugates. This leads to concentrate ubiquitinated histones H2A and H2AX at DNA lesions to the threshold required for recruitment of TP53BP1 and BRCA1. Also recruited at DNA interstrand cross-links (ICLs) sites and promotes accumulation of 'Lys-63'-linked ubiquitination of histones H2A and H2AX, leading to recruitment of FAAP20 and Fanconi anemia (FA) complex, followed by interstrand cross-link repair. H2A ubiquitination also mediates the ATM-dependent transcriptional silencing at regions flanking DSBs in cis, a mechanism to avoid collision between transcription and repair intermediates. Also involved in class switch recombination in immune system, via its role in regulation of DSBs repair. Following DNA damage, promotes the ubiquitination and degradation of JMJD2A/KDM4A in collaboration with RNF8, leading to unmask H4K20me2 mark and promote the recruitment of TP53BP1 at DNA damage sites. Not able to initiate 'Lys-63'-linked ubiquitination in vitro; possibly due to partial occlusion of the UBE2N/UBC13-binding region. Catalyzes monoubiquitination of 'Lys-13' and 'Lys-15' of nucleosomal histone H2A (H2AK13Ub and H2AK15Ub, respectively). The sequence is that of E3 ubiquitin-protein ligase RNF168 from Mus musculus (Mouse).